Reading from the N-terminus, the 689-residue chain is DNA ligase (689 aa).

Residues 40–44, 89–90, and glutamate 122 contribute to the NAD(+) site; these read DQEYD and SL. The active-site N6-AMP-lysine intermediate is lysine 124. 4 residues coordinate NAD(+): arginine 145, glutamate 182, lysine 300, and lysine 325. Positions 419, 422, 437, and 442 each coordinate Zn(2+). The 90-residue stretch at 600–689 folds into the BRCT domain; that stretch reads QADGVLTGAT…SADASADASA (90 aa).

This sequence belongs to the NAD-dependent DNA ligase family. LigA subfamily. It depends on Mg(2+) as a cofactor. Requires Mn(2+) as cofactor.

It catalyses the reaction NAD(+) + (deoxyribonucleotide)n-3'-hydroxyl + 5'-phospho-(deoxyribonucleotide)m = (deoxyribonucleotide)n+m + AMP + beta-nicotinamide D-nucleotide.. In terms of biological role, DNA ligase that catalyzes the formation of phosphodiester linkages between 5'-phosphoryl and 3'-hydroxyl groups in double-stranded DNA using NAD as a coenzyme and as the energy source for the reaction. It is essential for DNA replication and repair of damaged DNA. The polypeptide is DNA ligase (Gemmatimonas aurantiaca (strain DSM 14586 / JCM 11422 / NBRC 100505 / T-27)).